Consider the following 237-residue polypeptide: Putative exosome complex component rrp40 (237 aa).

One can recognise an S1 motif domain in the interval 67–137 (EDMVIGTIIE…EPEVVCLSQK (71 aa)).

The protein belongs to the RRP40 family. In terms of assembly, component of the RNA exosome complex.

It localises to the cytoplasm. The protein localises to the nucleus. The protein resides in the nucleolus. In terms of biological role, non-catalytic component of the RNA exosome complex which has 3'-&gt;5' exoribonuclease activity and participates in a multitude of cellular RNA processing and degradation events. This Dictyostelium discoideum (Social amoeba) protein is Putative exosome complex component rrp40 (exosc3).